The sequence spans 146 residues: Hemoglobin subunit beta (146 aa).

Valine 1 is modified (N-acetylvaline). A Globin domain is found at 2 to 146; it reads HLTDAEKALV…VATALAHKYH (145 aa). Threonine 12 carries the post-translational modification Phosphothreonine. Serine 44 bears the Phosphoserine mark. Position 59 is an N6-acetyllysine (lysine 59). Residue histidine 63 participates in heme b binding. N6-acetyllysine is present on lysine 82. Histidine 92 provides a ligand contact to heme b. Cysteine 93 carries the S-nitrosocysteine modification. N6-acetyllysine is present on lysine 144.

It belongs to the globin family. As to quaternary structure, heterotetramer of two alpha chains and two beta chains. In terms of tissue distribution, red blood cells.

Functionally, involved in oxygen transport from the lung to the various peripheral tissues. This Peromyscus crinitus (Canyon mouse) protein is Hemoglobin subunit beta.